We begin with the raw amino-acid sequence, 59 residues long: MRCLPVFVILLLLIASAPSVDARPKTKDDMPLASFHDNAKRILQILQDRNACCIVRQCC.

The signal sequence occupies residues 1 to 22 (MRCLPVFVILLLLIASAPSVDA). Residues 23-48 (RPKTKDDMPLASFHDNAKRILQILQD) constitute a propeptide that is removed on maturation.

Contains 2 disulfide bonds that can be either 'C1-C3, C2-C4' or 'C1-C4, C2-C3', since these disulfide connectivities have been observed for conotoxins with cysteine framework V (for examples, see AC P0DQQ7 and AC P81755). As to expression, expressed by the venom duct.

The protein localises to the secreted. The protein is Conotoxin mr5a of Conus marmoreus (Marble cone).